A 60-amino-acid chain; its full sequence is MRKLKMMLCVMMLPLVVVGCTSKQSVSQCVKPPRPPAWIMQPPPDWQTPLNGIISPSERG.

Residues 1–19 form the signal peptide; that stretch reads MRKLKMMLCVMMLPLVVVG. Residue Cys-20 is the site of N-palmitoyl cysteine attachment. Residue Cys-20 is the site of S-diacylglycerol cysteine attachment.

The protein belongs to the lambdalikevirus o-spanin family. Homodimer; disulfide-linked. Interacts (via C-terminus) with RZ (via C-terminus). Part of the spanin complex which spans the entire periplasmic space. The spanin complex is composed of spanin, inner membrane subunit and spanin, outer membrane subunit.

Its subcellular location is the cell outer membrane. Component of the spanin complex that disrupts the outer membrane and causes cell lysis during virus exit. The spanin complex conducts the final step in cell lysis by disrupting the outer membrane after holin and endolysin action have permeabilized the inner membrane and degraded the host peptidoglycans. This is Prophage outer membrane lipoprotein RzoD (rzoD) from Escherichia coli (strain K12).